Here is a 251-residue protein sequence, read N- to C-terminus: 2-amino-5-chloromuconate deaminase (251 aa).

In terms of assembly, monomer.

It catalyses the reaction (2Z,4E)-2-aminomuconate + H2O = (2Z,4E)-2-hydroxyhexa-2,4-dienedioate + NH4(+). The protein operates within xenobiotic degradation; 4-chloronitrobenzene degradation. Its pathway is xenobiotic degradation; nitrobenzene degradation. Cysteine residue modifying agents such as p-chloromercuribenzoate and the SH-binding metals Zn(2+), Ni(2+) and Cu(2+) completely inhibit deaminase activity, whereas Ca(2+), Mg(2+) and the histidine residue-modifying agent diethyl pyrocarbonate inhibit the activity by 23 to 50%. Involved in the biodegradation of xenobiotic compounds, such as nitrobenzene and 4-chloronitrobenzene (4-CNB). CnbZ preferentially catalyzes the deamination of 2-amino-5-chloromuconate (2A5CM) to yield 2-hydroxy-5-chloromuconate (2H5CM). Also able to catalyze the deamination of 2-aminomuconate to yield 2-hydroxymuconate, which spontaneously converts into its keto form, 2-oxalocrotonate. This Comamonas testosteroni (Pseudomonas testosteroni) protein is 2-amino-5-chloromuconate deaminase.